The sequence spans 210 residues: Glutathione S-transferase P 1 (210 aa).

In terms of domain architecture, GST N-terminal spans 1-80 (PEYTIIYFNA…LLARNHDLYG (80 aa)). Glutathione-binding positions include tyrosine 7, arginine 13, tryptophan 38, lysine 44, 51–52 (QL), and 64–65 (QS). In terms of domain architecture, GST C-terminal spans 82–203 (NPREASLIDM…SSDAHKKRPI (122 aa)).

This sequence belongs to the GST superfamily. Pi family. As to quaternary structure, homodimer.

The protein resides in the cytoplasm. It is found in the mitochondrion. Its subcellular location is the nucleus. It catalyses the reaction RX + glutathione = an S-substituted glutathione + a halide anion + H(+). Its function is as follows. Conjugation of reduced glutathione to a wide number of exogenous and endogenous hydrophobic electrophiles. This chain is Glutathione S-transferase P 1, found in Bufo bufo (European toad).